The chain runs to 264 residues: H-2 class II histocompatibility antigen, I-A beta chain (264 aa).

The first 31 residues, M1–R31, serve as a signal peptide directing secretion. The tract at residues P32–R121 is beta-1. Over P32–K225 the chain is Extracellular. Cystine bridges form between C42/C106 and C144/C200. The N-linked (GlcNAc...) asparagine glycan is linked to N46. The beta-2 stretch occupies residues V122–W215. The Ig-like C1-type domain maps to P124 to E214. The tract at residues K216–K225 is connecting peptide. Residues M226–F248 form a helical membrane-spanning segment. The Cytoplasmic segment spans residues R249–S264.

It belongs to the MHC class II family. Ubiquitinated in immature dendritic cells leading to down-regulation of MHC class II.

It localises to the membrane. The sequence is that of H-2 class II histocompatibility antigen, I-A beta chain (H2-Eb1) from Mus musculus (Mouse).